The following is a 476-amino-acid chain: Angiotensinogen (476 aa).

Positions 1–24 (MAPAGMSLRATILCLLAWAGLAAG) are cleaved as a signal peptide. Asn-38, Asn-161, Asn-295, and Asn-319 each carry an N-linked (GlcNAc...) asparagine glycan. An intrachain disulfide couples Cys-42 to Cys-162.

This sequence belongs to the serpin family. In response to low blood pressure, the enzyme renin/REN cleaves angiotensinogen to produce angiotensin-1. Angiotensin-1 is a substrate of ACE (angiotensin converting enzyme) that removes a dipeptide to yield the physiologically active peptide angiotensin-2. Angiotensin-1 and angiotensin-2 can be further processed to generate angiotensin-3, angiotensin-4. Angiotensin 1-9 is cleaved from angiotensin-1 by ACE2 and can be further processed by ACE to produce angiotensin 1-7, angiotensin 1-5 and angiotensin 1-4. Angiotensin 1-7 has also been proposed to be cleaved from angiotensin-2 by ACE2 or from angiotensin-1 by MME (neprilysin). Post-translationally, the disulfide bond is labile. Angiotensinogen is present in the circulation in a near 40:60 ratio with the oxidized disulfide-bonded form, which preferentially interacts with receptor-bound renin.

It localises to the secreted. Functionally, essential component of the renin-angiotensin system (RAS), a potent regulator of blood pressure, body fluid and electrolyte homeostasis. In terms of biological role, acts directly on vascular smooth muscle as a potent vasoconstrictor, affects cardiac contractility and heart rate through its action on the sympathetic nervous system, and alters renal sodium and water absorption through its ability to stimulate the zona glomerulosa cells of the adrenal cortex to synthesize and secrete aldosterone. Acts by binding to angiotensin receptors AGTR1 and AGTR2. Also binds the DEAR/FBXW7-AS1 receptor. Stimulates aldosterone release. Its function is as follows. Is a ligand for the G-protein coupled receptor MAS1. Has vasodilator and antidiuretic effects. Has an antithrombotic effect that involves MAS1-mediated release of nitric oxide from platelets. The chain is Angiotensinogen (AGT) from Gorilla gorilla gorilla (Western lowland gorilla).